We begin with the raw amino-acid sequence, 137 residues long: Diacylglycerol kinase (137 aa).

Residue E42 participates in a divalent metal cation binding. Helical transmembrane passes span 49 to 67 and 73 to 89; these read LIAFAAAMIAFIIVGATFF and AILFLLMMAFEAINTAI. The active-site Proton acceptor is the E83. E90 lines the a divalent metal cation pocket. A helical transmembrane segment spans residues 112–132; it reads SFACLCLIVANGVYAAYVVIF.

Belongs to the bacterial diacylglycerol kinase family. The cofactor is Mg(2+).

It is found in the cell inner membrane. The catalysed reaction is a 1,2-diacyl-sn-glycerol + ATP = a 1,2-diacyl-sn-glycero-3-phosphate + ADP + H(+). In terms of biological role, catalyzes the ATP-dependent phosphorylation of sn-l,2-diacylglycerol (DAG) to phosphatidic acid. Involved in the recycling of diacylglycerol produced as a by-product during membrane-derived oligosaccharide (MDO) biosynthesis. The sequence is that of Diacylglycerol kinase (dgkA) from Sinorhizobium sp.